The sequence spans 248 residues: Probable transcriptional regulatory protein RPE_4771 (248 aa).

The segment at 1–21 (MAGHSQFKNIMHRKGRQDAQK) is disordered.

It belongs to the TACO1 family.

It localises to the cytoplasm. This is Probable transcriptional regulatory protein RPE_4771 from Rhodopseudomonas palustris (strain BisA53).